A 31-amino-acid chain; its full sequence is Photosystem II reaction center protein T (31 aa).

The chain crosses the membrane as a helical span at residues A3–F23.

The protein belongs to the PsbT family. PSII is composed of 1 copy each of membrane proteins PsbA, PsbB, PsbC, PsbD, PsbE, PsbF, PsbH, PsbI, PsbJ, PsbK, PsbL, PsbM, PsbT, PsbY, PsbZ, Psb30/Ycf12, at least 3 peripheral proteins of the oxygen-evolving complex and a large number of cofactors. It forms dimeric complexes.

It localises to the plastid. The protein resides in the chloroplast thylakoid membrane. Found at the monomer-monomer interface of the photosystem II (PS II) dimer, plays a role in assembly and dimerization of PSII. PSII is a light-driven water plastoquinone oxidoreductase, using light energy to abstract electrons from H(2)O, generating a proton gradient subsequently used for ATP formation. This chain is Photosystem II reaction center protein T, found in Nephroselmis olivacea (Green alga).